An 88-amino-acid polypeptide reads, in one-letter code: LKFVVLICLVIMASTSAQQCGDETCGAGTCCAVFSQNHCRRLSRMYDLCSDHADASPSGNYLFFCPCEPGLHCDRNTWTCTEGSSRSE.

The N-terminal stretch at 1-17 is a signal peptide; it reads LKFVVLICLVIMASTSA. At Q18 the chain carries Pyrrolidone carboxylic acid. Cystine bridges form between C20–C31, C25–C39, C30–C65, C49–C73, and C67–C80. Residues 86 to 88 constitute a propeptide that is removed on maturation; it reads RSE.

The protein belongs to the MIT-like AcTx family. In terms of tissue distribution, expressed by the venom gland.

The protein localises to the secreted. In Illawarra wisharti (Illawarra funnel-web spider), this protein is U1-hexatoxin-Iw1d.